The chain runs to 307 residues: Myeloid-associated differentiation marker-like protein 2 (307 aa).

MARVEL domains are found at residues 17-154 (AVTS…ARPG) and 159-303 (YMAT…RIRF). A run of 7 helical transmembrane segments spans residues 53 to 73 (FCMA…ACEF), 90 to 110 (AFAM…PLYF), 129 to 149 (LAAS…VALT), 163 to 183 (VSGL…GALV), 198 to 218 (VAVY…SVMG), 232 to 252 (VVYT…WPVF), and 278 to 298 (LVVA…LAYS).

The protein belongs to the MAL family.

It is found in the membrane. The sequence is that of Myeloid-associated differentiation marker-like protein 2 (Myadml2) from Rattus norvegicus (Rat).